A 267-amino-acid polypeptide reads, in one-letter code: Interleukin-1 beta (267 aa).

The propeptide occupies 1-115; it reads MAPVPELTSE…DTWDDGFVCD (115 aa).

The protein belongs to the IL-1 family. As to quaternary structure, monomer. In its precursor form, weakly interacts with full-length MEFV; the mature cytokine does not interact at all. Interacts with integrins ITGAV:ITGBV and ITGA5:ITGB1; integrin-binding is required for IL1B signaling. Interacts with cargo receptor TMED10; the interaction is direct and is required for the secretion of IL1B mature form. Interacts with HSP90AB1; the interaction facilitates cargo translocation into the ERGIC. Interacts with HSP90B1; the interaction facilitates cargo translocation into the ERGIC.

Its subcellular location is the cytoplasm. It is found in the cytosol. The protein resides in the secreted. It localises to the lysosome. The protein localises to the extracellular exosome. Functionally, potent pro-inflammatory cytokine. Initially discovered as the major endogenous pyrogen, induces prostaglandin synthesis, neutrophil influx and activation, T-cell activation and cytokine production, B-cell activation and antibody production, and fibroblast proliferation and collagen production. Promotes Th17 differentiation of T-cells. Synergizes with IL12/interleukin-12 to induce IFNG synthesis from T-helper 1 (Th1) cells. Plays a role in angiogenesis by inducing VEGF production synergistically with TNF and IL6. Involved in transduction of inflammation downstream of pyroptosis: its mature form is specifically released in the extracellular milieu by passing through the gasdermin-D (GSDMD) pore. This is Interleukin-1 beta (IL1B) from Felis catus (Cat).